A 237-amino-acid polypeptide reads, in one-letter code: Large ribosomal subunit protein uL1 (237 aa).

It belongs to the universal ribosomal protein uL1 family. As to quaternary structure, part of the 50S ribosomal subunit.

Its function is as follows. Binds directly to 23S rRNA. The L1 stalk is quite mobile in the ribosome, and is involved in E site tRNA release. Functionally, protein L1 is also a translational repressor protein, it controls the translation of the L11 operon by binding to its mRNA. This chain is Large ribosomal subunit protein uL1, found in Nocardia farcinica (strain IFM 10152).